The sequence spans 131 residues: Runt-related transcription factor 2 (131 aa).

The Runt domain maps to 1 to 10; sequence MRVGVPPQIP. The interval 1–75 is disordered; the sequence is MRVGVPPQIP…SSTRGTGLPV (75 aa). Arginine 11 is subject to Asymmetric dimethylarginine. 2 stretches are compositionally biased toward polar residues: residues 13–36 and 43–70; these read SLNS…RQAQ and YDQS…STRG.

As to quaternary structure, heterodimer of an alpha and a beta subunit. The alpha subunit binds DNA as a monomer and through the Runt domain. DNA-binding is increased by heterodimerization. Interacts with XRCC6 (Ku70) and XRCC5 (Ku80). Interacts with CCNB1, KAT6A and KAT6B. Interacts with HIVEP3. Interacts with IFI204. Interaction with SATB2; the interaction results in enhanced DNA binding and transactivation by these transcription factors. Binds to HIPK3. Interacts with FOXO1 (via a C-terminal region); the interaction inhibits RUNX2 transcriptional activity towards BGLAP. This interaction is prevented on insulin or IGF1 stimulation as FOXO1 is exported from the nucleus. Interacts with FOXP3. Interacts with TMEM119. Interacts with OLFM2. Interacts with IPO7; the interaction inhibits RUNX2 nuclear translocation in osteoblasts. Phosphorylated; probably by MAP kinases (MAPK). Phosphorylation by HIPK3 is required for the SPEN/MINT and FGF2 transactivation during osteoblastic differentiation.

Its subcellular location is the nucleus. It localises to the cytoplasm. Transcription factor involved in osteoblastic differentiation and skeletal morphogenesis. Essential for the maturation of osteoblasts and both intramembranous and endochondral ossification. CBF binds to the core site, 5'-PYGPYGGT-3', of a number of enhancers and promoters, including murine leukemia virus, polyomavirus enhancer, T-cell receptor enhancers, osteocalcin, osteopontin, bone sialoprotein, alpha 1(I) collagen, LCK, IL-3 and GM-CSF promoters. Inhibits KAT6B-dependent transcriptional activation. In osteoblasts, supports transcription activation: synergizes with SPEN/MINT to enhance FGFR2-mediated activation of the osteocalcin FGF-responsive element (OCFRE). This chain is Runt-related transcription factor 2 (RUNX2), found in Equus caballus (Horse).